Here is a 341-residue protein sequence, read N- to C-terminus: MKKYKTGIINVTGYAGLELARILESHPSVELCSVTGRSLAGKKLSDVFPYLHRLDLPITENLEGQVDVAFLALPHKEGAALVPALLEKGMRVIDISADFRLKDPALYQAWYGFEHPCPGLLEEAVYGLPELKRKDIAGARLVANPGCYPTSAILGLVPAFKSDLIEPSAIIDAKSGLSGSGRTPTVKTIFCEADEDVCAYSIGTHRHQPEIVQELCRASRGVIPRVTFCPHLVPMSRGILSTAYARLKQPVTDEEVKEIYRQFYKDEPFVKVTAEPPHTRYTRGTNMCFIYPVVDALNEQLIVISCIDNLVKGAAGQAVQNMNIMLGLAETEGLEAMATLP.

Residue C147 is part of the active site.

It belongs to the NAGSA dehydrogenase family. Type 1 subfamily.

It localises to the cytoplasm. The catalysed reaction is N-acetyl-L-glutamate 5-semialdehyde + phosphate + NADP(+) = N-acetyl-L-glutamyl 5-phosphate + NADPH + H(+). The protein operates within amino-acid biosynthesis; L-arginine biosynthesis; N(2)-acetyl-L-ornithine from L-glutamate: step 3/4. Its function is as follows. Catalyzes the NADPH-dependent reduction of N-acetyl-5-glutamyl phosphate to yield N-acetyl-L-glutamate 5-semialdehyde. The chain is N-acetyl-gamma-glutamyl-phosphate reductase from Dehalococcoides mccartyi (strain CBDB1).